Here is a 1690-residue protein sequence, read N- to C-terminus: Restin homolog (1690 aa).

Polar residues-rich tracts occupy residues 1–11 and 39–51; these read MSDDTSASGGT and NIPT…TGIP. The tract at residues 1–105 is disordered; that stretch reads MSDDTSASGG…ESDDNLSSIN (105 aa). Residues Ser-64 and Ser-67 each carry the phosphoserine modification. In terms of domain architecture, CAP-Gly 1 spans 143-185; the sequence is GDTHFAAGEWAGVVLDEPNGKNDGCVSGKRYFQCEPKRGIFSR. The tract at residues 195–227 is disordered; the sequence is AGAQTPTSPLAKSSPDRSRTVSPTASIRSSMLR. Residues 214-226 show a composition bias toward polar residues; the sequence is TVSPTASIRSSML. A Phosphoserine modification is found at Ser-216. The CAP-Gly 2 domain maps to 260 to 302; that stretch reads GETQFAPGNWCGVELDEPSGKNDGTVDDIRYFECKPKYGVFVP. 3 positions are modified to phosphoserine: Ser-309, Ser-322, and Ser-325. Thr-327 carries the phosphothreonine modification. At Ser-328 the chain carries Phosphoserine. The residue at position 362 (Thr-362) is a Phosphothreonine. Coiled-coil stretches lie at residues 378–468, 484–660, 667–916, 926–981, 1001–1121, 1158–1549, and 1565–1600; these read QHVE…VSAT, GALQ…DMLR, EEKS…TKLK, LSSC…ELQA, ATGH…EAIQ, EADM…AQMN, and DIET…LETL. A disordered region spans residues 843–905; the sequence is QQAAASGEEG…GSLEEEAKKS (63 aa). The span at 865 to 885 shows a compositional bias: polar residues; the sequence is QLKSQAEETQSELKSTQSNLE. Disordered regions lie at residues 1031-1052 and 1400-1419; these read QLQD…KEKS and KLDE…NEIQ. Composition is skewed to basic and acidic residues over residues 1040 to 1052 and 1410 to 1419; these read TKLK…KEKS and SQKKSHNEIQ. Residues 1635–1665 form a disordered region; the sequence is TEDCPIQGSEDQDYSTPSSESNNNEKERKLP. Thr-1681 is subject to Phosphothreonine. Ser-1682 is modified (phosphoserine).

Interacts with Lva. Specifically expressed at the tip of the furrow in cellularizing blastoderms. CLIP-190 and jar are coexpressed at several times in development and in a number of tissues, including embryonic axonal neuron processes and posterior pole.

It localises to the cytoplasm. The protein resides in the cytoskeleton. Its subcellular location is the golgi apparatus. It is found in the microtubule organizing center. The protein localises to the perinuclear region. In terms of biological role, together CLIP-190 and jar may coordinate the interaction between the actin and microtubule cytoskeleton. May link endocytic vesicles to microtubules. May play a role in formation of furrows during cellularization. The sequence is that of Restin homolog (CLIP-190) from Drosophila melanogaster (Fruit fly).